Here is a 380-residue protein sequence, read N- to C-terminus: Cytochrome b (380 aa).

Transmembrane regions (helical) follow at residues 34 to 54, 78 to 99, 114 to 134, and 179 to 199; these read FGSL…LLAM, WLIR…FLHI, WNTG…GYVL, and FFAL…VHLT. Heme b-binding residues include H84 and H98. Heme b is bound by residues H183 and H197. H202 provides a ligand contact to a ubiquinone. The next 4 membrane-spanning stretches (helical) occupy residues 227–247, 289–309, 321–341, and 348–368; these read LKDI…ALFS, LGGV…PFLH, LSQT…WIGS, and FMII…ILFP.

This sequence belongs to the cytochrome b family. As to quaternary structure, the cytochrome bc1 complex contains 11 subunits: 3 respiratory subunits (MT-CYB, CYC1 and UQCRFS1), 2 core proteins (UQCRC1 and UQCRC2) and 6 low-molecular weight proteins (UQCRH/QCR6, UQCRB/QCR7, UQCRQ/QCR8, UQCR10/QCR9, UQCR11/QCR10 and a cleavage product of UQCRFS1). This cytochrome bc1 complex then forms a dimer. Heme b is required as a cofactor.

It localises to the mitochondrion inner membrane. Functionally, component of the ubiquinol-cytochrome c reductase complex (complex III or cytochrome b-c1 complex) that is part of the mitochondrial respiratory chain. The b-c1 complex mediates electron transfer from ubiquinol to cytochrome c. Contributes to the generation of a proton gradient across the mitochondrial membrane that is then used for ATP synthesis. The protein is Cytochrome b (MT-CYB) of Gallus lafayettii (Sri Lanka junglefowl).